The chain runs to 77 residues: UPF0349 protein lmo2392 (77 aa).

Belongs to the UPF0349 family.

This is UPF0349 protein lmo2392 from Listeria monocytogenes serovar 1/2a (strain ATCC BAA-679 / EGD-e).